A 66-amino-acid chain; its full sequence is Protein I177L (66 aa).

The protein belongs to the asfivirus I177L family.

The protein resides in the virion. In Ornithodoros (relapsing fever ticks), this protein is Protein I177L.